The sequence spans 625 residues: Thrombopoietin receptor (625 aa).

Residues 1-25 (MPSWALFMVTSCLLLALPNQAQVTS) form the signal peptide. The Extracellular segment spans residues 26–482 (QDVFLLALGT…RVSTGSETAW (457 aa)). The N-linked (GlcNAc...) asparagine glycan is linked to N117. Fibronectin type-III domains lie at 178–270 (NATA…PVTV) and 383–479 (PTPS…TGSE). Residues 465–469 (WSAWS) carry the WSXWS motif motif. The chain crosses the membrane as a helical span at residues 483-504 (ITLVTALLLVLSLSALLGLLLL). Over 505-625 (KWQFPAHYRR…YLPLSYWQQP (121 aa)) the chain is Cytoplasmic. Residues 519–527 (LWPSLPDLH) carry the Box 1 motif motif. Residues K544 and K564 each participate in a glycyl lysine isopeptide (Lys-Gly) (interchain with G-Cter in ubiquitin) cross-link. Phosphotyrosine is present on residues Y616 and Y621.

It belongs to the type I cytokine receptor family. Type 1 subfamily. In terms of assembly, homodimer. Interacts with ATXN2L. Interacts with JAK2 and TYK2; these interactions increase MPL localization to the cell membrane. Interacts with THPO. Interacts with SHIP/INPP5D. Interacts with kinases BTK and SYK. Ubiquitination at Lys-544 and Lys-564 targets MPL for degradation by both the lysosomal and proteasomal pathways. The E3 ubiquitin-protein ligase CBL significantly contributes to this ubiquitination.

The protein localises to the cell membrane. The protein resides in the golgi apparatus. Its subcellular location is the cell surface. Receptor for thrombopoietin that regulates hematopoietic stem cell renewal, megakaryocyte differentiation, and platelet formation. Upon activation by THPO, induces rapid tyrosine phosphorylation and activation of JAK2, providing docking sites for many signaling proteins such as STAT5, SHIP/INPP5D, GRB2, SOS1 and PI3K. In turn, These signaling cascades lead to the proliferation, survival, and differentiation of megakaryocytes, ultimately leading to increased platelet production. Its function is as follows. Acts as an inhibitor of thrombopoietin signaling by promoting protein down-regulation of full-length isoform Mpl-fl. The sequence is that of Thrombopoietin receptor (Mpl) from Mus musculus (Mouse).